Here is a 336-residue protein sequence, read N- to C-terminus: MLGYILWTSLYVLLIVIPLILVVAYYTYAERKVIGYMQDRIGPNRVGSFGLLQPIFDALKLFLKEIIVPTNSNRYLFFIAPILAFAPAYAAWAVIPFSKGVVLSDMNLGLLYILAMTSFSIYGIVIAGWASNSKYSLFGALRAGAQVISYELAMGFAIVGVVIAAGSMGITGIIEAQSGGIWHWYFIPLFPLFIVYFIAGIAETNRAPFDVVEGESEIVAGHHIEYTGSRFALFFLAEYANMILISILTSIMFLGGWNSPFQATALESIFGFVPGVVWLFAKTGIFMFMFLWVRATYPRYRYDQIMRLGWKIFIPLTFVWVVIVACMVRLGVGPWW.

The next 8 helical transmembrane spans lie at 4-24 (YILWTSLYVLLIVIPLILVVA), 75-95 (YLFFIAPILAFAPAYAAWAVI), 108-128 (LGLLYILAMTSFSIYGIVIAG), 154-174 (MGFAIVGVVIAAGSMGITGII), 181-201 (IWHWYFIPLFPLFIVYFIAGI), 233-253 (LFFLAEYANMILISILTSIMF), 272-292 (FVPGVVWLFAKTGIFMFMFLW), and 308-328 (LGWKIFIPLTFVWVVIVACMV).

This sequence belongs to the complex I subunit 1 family. NDH-1 is composed of 14 different subunits. Subunits NuoA, H, J, K, L, M, N constitute the membrane sector of the complex.

The protein localises to the cell inner membrane. It catalyses the reaction a quinone + NADH + 5 H(+)(in) = a quinol + NAD(+) + 4 H(+)(out). In terms of biological role, NDH-1 shuttles electrons from NADH, via FMN and iron-sulfur (Fe-S) centers, to quinones in the respiratory chain. The immediate electron acceptor for the enzyme in this species is believed to be ubiquinone. Couples the redox reaction to proton translocation (for every two electrons transferred, four hydrogen ions are translocated across the cytoplasmic membrane), and thus conserves the redox energy in a proton gradient. This subunit may bind ubiquinone. This is NADH-quinone oxidoreductase subunit H from Francisella tularensis subsp. tularensis (strain FSC 198).